Reading from the N-terminus, the 226-residue chain is 7-cyano-7-deazaguanine synthase (226 aa).

7-17 (LSGGMDSLVTT) contacts ATP. Residues C187, C195, C198, and C201 each coordinate Zn(2+).

It belongs to the QueC family. Zn(2+) serves as cofactor.

It catalyses the reaction 7-carboxy-7-deazaguanine + NH4(+) + ATP = 7-cyano-7-deazaguanine + ADP + phosphate + H2O + H(+). It participates in purine metabolism; 7-cyano-7-deazaguanine biosynthesis. Functionally, catalyzes the ATP-dependent conversion of 7-carboxy-7-deazaguanine (CDG) to 7-cyano-7-deazaguanine (preQ(0)). In Chlorobium phaeobacteroides (strain DSM 266 / SMG 266 / 2430), this protein is 7-cyano-7-deazaguanine synthase.